A 311-amino-acid polypeptide reads, in one-letter code: Putative F-box protein At3g28280 (311 aa).

An F-box domain is found at 1 to 43 (MNSLPEDLLAMILVKLPIKIFTTFKIVCTQWESMVDSPYFRDL).

In Arabidopsis thaliana (Mouse-ear cress), this protein is Putative F-box protein At3g28280.